The sequence spans 419 residues: Enolase (419 aa).

Residue Q161 participates in (2R)-2-phosphoglycerate binding. E205 (proton donor) is an active-site residue. 3 residues coordinate Mg(2+): D240, E283, and D309. The (2R)-2-phosphoglycerate site is built by K334, R363, S364, and K385. The Proton acceptor role is filled by K334.

This sequence belongs to the enolase family. The cofactor is Mg(2+).

The protein localises to the cytoplasm. Its subcellular location is the secreted. It localises to the cell surface. It carries out the reaction (2R)-2-phosphoglycerate = phosphoenolpyruvate + H2O. The protein operates within carbohydrate degradation; glycolysis; pyruvate from D-glyceraldehyde 3-phosphate: step 4/5. Catalyzes the reversible conversion of 2-phosphoglycerate (2-PG) into phosphoenolpyruvate (PEP). It is essential for the degradation of carbohydrates via glycolysis. This Saccharolobus islandicus (strain M.16.27) (Sulfolobus islandicus) protein is Enolase.